The following is a 293-amino-acid chain: Epidermal growth factor-like protein 8 (293 aa).

The signal sequence occupies residues 1–28 (MGLWAELCISLRGLSFFLVLMTGEGTRG). Residues 34-112 (SLGVCSKQTL…PHPGALTCDA (79 aa)) enclose the EMI domain. Cystine bridges form between C38/C97, C65/C71, C96/C110, C114/C124, C118/C130, C132/C141, C148/C159, C155/C168, and C170/C183. The N-linked (GlcNAc...) asparagine glycan is linked to N50. The EGF-like 1 domain occupies 111-142 (DAICSKPCLNGGVCTGPDRCECAPGWGGKHCH). The EGF-like 2; calcium-binding domain maps to 144–184 (DVDECRASLTLCSHGCLNTLGSFLCSCPHPLVLGLDGRTCA). The stretch at 206–235 (SEEERALRWEVAELRGRLEKLEQWATQAGA) forms a coiled coil.

Ubiquitously expressed in brain, kidney, thymus and lung.

The protein resides in the secreted. This Mus musculus (Mouse) protein is Epidermal growth factor-like protein 8 (Egfl8).